A 628-amino-acid chain; its full sequence is Chaperone protein HtpG (628 aa).

Residues 1 to 339 (MSNNQQTLGF…SNDLPLNVSR (339 aa)) are a; substrate-binding. The segment at 340 to 556 (EILQDNKTTA…NDQMTTQMAK (217 aa)) is b. The c stretch occupies residues 557–628 (LFAMSGQPVP…IKRVNTLLAG (72 aa)).

This sequence belongs to the heat shock protein 90 family. As to quaternary structure, homodimer.

The protein localises to the cytoplasm. Its function is as follows. Molecular chaperone. Has ATPase activity. In Actinobacillus succinogenes (strain ATCC 55618 / DSM 22257 / CCUG 43843 / 130Z), this protein is Chaperone protein HtpG.